Here is a 5061-residue protein sequence, read N- to C-terminus: E3 ubiquitin-protein ligase rnf213-beta (5061 aa).

A compositionally biased stretch (basic residues) spans 1–12 (MTRKRKSGKKGK). A disordered region spans residues 1–334 (MTRKRKSGKK…QRKPSPVRAP (334 aa)). Composition is skewed to polar residues over residues 24–52 (GGST…TQKD) and 75–87 (SDGS…TNKE). Residues 100-110 (LQKKGPQKRKG) are compositionally biased toward basic residues. 2 stretches are compositionally biased toward polar residues: residues 127-163 (QTSY…TSAS) and 172-200 (TETV…QPPQ). Basic and acidic residues-rich tracts occupy residues 217–229 (KGSE…EESV) and 236–289 (LSEI…EEPK). Low complexity predominate over residues 292–301 (AAAAATGKTG). Polar residues predominate over residues 306–322 (EQTNQIEANQDSTMESK). Residues 1923-1928 (AVGKSL), Glu2023, Asp2074, Lys2417, and Ser2492 contribute to the ATP site. Residues Cys3957, Cys3960, Cys3972, His3974, Cys3977, Cys3980, Cys3993, Cys3996, Cys4451, and His4455 each contribute to the Zn(2+) site. The RING-type zinc finger occupies 3957–3997 (CRVCLMELSEPFALPCEHVFCRSCLRRSMEREEAQHCPVCR). The segment at 4429-4501 (MPDDHTSEAK…AYGDYDRTRP (73 aa)) adopts an RZ-type zinc-finger fold. Cys4462 serves as the catalytic Nucleophile; for E3 ubiquitin-lipopolysaccharide ligase activity. Positions 4471 and 4474 each coordinate Zn(2+).

Belongs to the AAA ATPase family.

The protein resides in the cytoplasm. It localises to the cytosol. Its subcellular location is the lipid droplet. The enzyme catalyses S-ubiquitinyl-[E2 ubiquitin-conjugating enzyme]-L-cysteine + [acceptor protein]-L-lysine = [E2 ubiquitin-conjugating enzyme]-L-cysteine + N(6)-ubiquitinyl-[acceptor protein]-L-lysine.. It catalyses the reaction ATP + H2O = ADP + phosphate + H(+). The protein operates within protein modification; protein ubiquitination. In terms of biological role, atypical E3 ubiquitin ligase that can catalyze ubiquitination of both proteins and lipids, and which is involved in various processes, such as lipid metabolism, angiogenesis and cell-autonomous immunity. Acts as a key immune sensor by catalyzing ubiquitination of the lipid A moiety of bacterial lipopolysaccharide (LPS) via its RZ-type zinc-finger: restricts the proliferation of cytosolic bacteria, such as Salmonella, by generating the bacterial ubiquitin coat through the ubiquitination of LPS. Ubiquitination of LPS triggers cell-autonomous immunity, such as antibacterial autophagy, leading to degradation of the microbial invader. Involved in lipid metabolism by regulating fat storage and lipid droplet formation; act by inhibiting the lipolytic process. Also regulates lipotoxicity by inhibiting desaturation of fatty acids. Also acts as an E3 ubiquitin-protein ligase via its RING-type zinc finger. Involved in the non-canonical Wnt signaling pathway in vascular development: acts by mediating ubiquitination and degradation of proteins downstream of rspo3, leading to inhibit the non-canonical Wnt signaling pathway and promoting vessel regression. Also has ATPase activity; ATPase activity is required for ubiquitination of LPS. This is E3 ubiquitin-protein ligase rnf213-beta (rnf213b) from Danio rerio (Zebrafish).